A 382-amino-acid polypeptide reads, in one-letter code: Dual-specificity RNA methyltransferase RlmN (382 aa).

The active-site Proton acceptor is the glutamate 113. In terms of domain architecture, Radical SAM core spans 119 to 358 (EINRATLCIS…TTIRKQRGID (240 aa)). Cysteine 126 and cysteine 363 form a disulfide bridge. Residues cysteine 133, cysteine 137, and cysteine 140 each contribute to the [4Fe-4S] cluster site. S-adenosyl-L-methionine-binding positions include 187–188 (GE), serine 219, 241–243 (SLH), and asparagine 320. Cysteine 363 functions as the S-methylcysteine intermediate in the catalytic mechanism.

Belongs to the radical SAM superfamily. RlmN family. It depends on [4Fe-4S] cluster as a cofactor.

The protein resides in the cytoplasm. It catalyses the reaction adenosine(2503) in 23S rRNA + 2 reduced [2Fe-2S]-[ferredoxin] + 2 S-adenosyl-L-methionine = 2-methyladenosine(2503) in 23S rRNA + 5'-deoxyadenosine + L-methionine + 2 oxidized [2Fe-2S]-[ferredoxin] + S-adenosyl-L-homocysteine. The enzyme catalyses adenosine(37) in tRNA + 2 reduced [2Fe-2S]-[ferredoxin] + 2 S-adenosyl-L-methionine = 2-methyladenosine(37) in tRNA + 5'-deoxyadenosine + L-methionine + 2 oxidized [2Fe-2S]-[ferredoxin] + S-adenosyl-L-homocysteine. Its function is as follows. Specifically methylates position 2 of adenine 2503 in 23S rRNA and position 2 of adenine 37 in tRNAs. m2A2503 modification seems to play a crucial role in the proofreading step occurring at the peptidyl transferase center and thus would serve to optimize ribosomal fidelity. The protein is Dual-specificity RNA methyltransferase RlmN of Wigglesworthia glossinidia brevipalpis.